We begin with the raw amino-acid sequence, 340 residues long: Cytoskeleton protein RodZ (340 aa).

The Cytoplasmic segment spans residues 1 to 111 (MNTEATQEKS…LGKQRKKRDG (111 aa)). The HTH cro/C1-type domain maps to 19–79 (LRTAREQMGL…RLVHVPEEEL (61 aa)). The segment at residues 30 to 49 (QQNVAERLCLKLSTIRDIEE) is a DNA-binding region (H-T-H motif). A helical; Signal-anchor for type II membrane protein transmembrane segment spans residues 112 to 132 (WLMIFTWLVLFVVLGLTGAWW). Over 133-340 (WQNHKAAQDD…QVARLTVGAP (208 aa)) the chain is Periplasmic. Residues 162–252 (ALSDDNANGG…AAPLPTGSAA (91 aa)) form a disordered region. A compositionally biased stretch (polar residues) spans 183–201 (ATANNAPSSVTATSDNGTP). Over residues 202–233 (AATAQSSQVTASNAAPAANAVNDNTPPVAVAP) the composition is skewed to low complexity.

The protein belongs to the RodZ family.

It localises to the cell inner membrane. In terms of biological role, cytoskeletal protein that is involved in cell-shape control through regulation of the length of the long axis. The chain is Cytoskeleton protein RodZ from Erwinia tasmaniensis (strain DSM 17950 / CFBP 7177 / CIP 109463 / NCPPB 4357 / Et1/99).